The following is a 441-amino-acid chain: Serine hydroxymethyltransferase (441 aa).

Residues Leu-119 and 123–125 each bind (6S)-5,6,7,8-tetrahydrofolate; that span reads GHL. Lys-228 is subject to N6-(pyridoxal phosphate)lysine. 370-372 is a binding site for (6S)-5,6,7,8-tetrahydrofolate; that stretch reads SPF.

It belongs to the SHMT family. As to quaternary structure, homodimer. Pyridoxal 5'-phosphate serves as cofactor.

The protein localises to the cytoplasm. The catalysed reaction is (6R)-5,10-methylene-5,6,7,8-tetrahydrofolate + glycine + H2O = (6S)-5,6,7,8-tetrahydrofolate + L-serine. It participates in one-carbon metabolism; tetrahydrofolate interconversion. It functions in the pathway amino-acid biosynthesis; glycine biosynthesis; glycine from L-serine: step 1/1. Its function is as follows. Catalyzes the reversible interconversion of serine and glycine with tetrahydrofolate (THF) serving as the one-carbon carrier. This reaction serves as the major source of one-carbon groups required for the biosynthesis of purines, thymidylate, methionine, and other important biomolecules. Also exhibits THF-independent aldolase activity toward beta-hydroxyamino acids, producing glycine and aldehydes, via a retro-aldol mechanism. This Chlorobium phaeovibrioides (strain DSM 265 / 1930) (Prosthecochloris vibrioformis (strain DSM 265)) protein is Serine hydroxymethyltransferase.